Reading from the N-terminus, the 68-residue chain is uncharacterized protein (68 aa).

This is an uncharacterized protein from Enterobacteria phage T4 (Bacteriophage T4).